The sequence spans 349 residues: Diacylglycerol O-acyltransferase 2B (349 aa).

The next 2 membrane-spanning stretches (helical) occupy residues 44–64 (ICLI…ILIM) and 114–134 (YIMS…NFAT).

This sequence belongs to the diacylglycerol acyltransferase family.

It localises to the endoplasmic reticulum membrane. The enzyme catalyses an acyl-CoA + a 1,2-diacyl-sn-glycerol = a triacyl-sn-glycerol + CoA. It participates in glycerolipid metabolism; triacylglycerol biosynthesis. In terms of biological role, catalyzes the terminal and only committed step in triacylglycerol synthesis by using diacylglycerol and fatty acyl CoA as substrates. Required for storage lipid synthesis. The sequence is that of Diacylglycerol O-acyltransferase 2B (DGAT2B) from Umbelopsis ramanniana (Oleaginous fungus).